The primary structure comprises 335 residues: Acetyl-coenzyme A carboxylase carboxyl transferase subunit alpha (335 aa).

Positions 48-308 (VLESKVDALR…KSLLVEELRM (261 aa)) constitute a CoA carboxyltransferase C-terminal domain.

Belongs to the AccA family. As to quaternary structure, acetyl-CoA carboxylase is a heterohexamer composed of biotin carboxyl carrier protein (AccB), biotin carboxylase (AccC) and two subunits each of ACCase subunit alpha (AccA) and ACCase subunit beta (AccD).

The protein localises to the cytoplasm. The catalysed reaction is N(6)-carboxybiotinyl-L-lysyl-[protein] + acetyl-CoA = N(6)-biotinyl-L-lysyl-[protein] + malonyl-CoA. It participates in lipid metabolism; malonyl-CoA biosynthesis; malonyl-CoA from acetyl-CoA: step 1/1. In terms of biological role, component of the acetyl coenzyme A carboxylase (ACC) complex. First, biotin carboxylase catalyzes the carboxylation of biotin on its carrier protein (BCCP) and then the CO(2) group is transferred by the carboxyltransferase to acetyl-CoA to form malonyl-CoA. This is Acetyl-coenzyme A carboxylase carboxyl transferase subunit alpha from Chlorobium phaeobacteroides (strain BS1).